The chain runs to 1091 residues: MADNKGGGGGGGETEGDASSNNNNNSNGAGETGSPGETESQAVEEPESAEKAPVAAVPTDTPAEENPAPSSSSVASSSATPASSSSSPLVVNLLDTCAVCKLSLQSRDTEPKLLPCLHSFCRRCLPEPERQLSVPGGTNGDIQQVGVIRCLVCRQECRQIDLVDNYFVKDASEAPNTDEKSEQVCTSCEDNASAVGFCVECGEWLCKTCIEAHQRVKFTKDHIITNKEDVSSESVGASGQRPVFCPVHKQEQLKLFCETCDRLTCRDCQLLEHKEHRYQFLEEAFQNQKGAIENLLAKLLEKKNYVHFAATQVQNRIKEVNETNKRVEQEIKVAIFTLINEINKKGKSLLQQLESVTKERQIKLVQQQNDITGLSRQIKHVMTFTNWAIASGSSTALLYSKRLITFQLRHILKARCDPVPAANGAIRFHCDPTFWAKNVVNLGNLVIENKPTTGFTPNVVVGQVPQGANHVNKPPAQINLAQLRLQHMQQQVYAQKQQQLQMRMAQPPGQHQRPSAPQVMHQQPPRLISMQSMPRNNMNCGPFQAHQMRMAQNAAQNAARMSGVPRHNGMQYSMMQPHLQRQHSNPGHAGPFPVVSVHNNTINPTSPTTATMANANRGPTSPSVTSIELIPSVTNPENLPSLPDIPPIQLEDAGSSNLDNLLSRYISLGHQLPQPTSNMNPSPAPSAMSPGSTGLSNSHTPVRPPSTSSTGSRGSCGSSSRTVERNSSFKSDPVKVKQEPGTEEEVCSFSGPVKQEKAEDGRRSACMLSSPESSLTPPLTTNVHLETDLESLAALENNVKTEPNNTSQSCRQSSHVSLVNGKSAVRNSMHRPPRGGGGGDGSNKDDDPNEDWCAVCQNGGDLLCCEKCPKVFHLTCHVPTLLSFPSGEWICTFCRDLNKPEVEYDCDNSQHSKKGKTVQGLSPVDQMKCERLLLYLYCHELSIEFQEPVPATIPNYYKIIKKPMDLSTVKKKLQKKHSQHYQTPEDFVADVRLIFKNCERFNEMMKVVQAYADTQEINLQNDSEVAQAGKAVVLYFEEKLPAIYPDRTFQPLPEFEAEDDDGDVTDDSDDDDFVQPRRKRLKSEERPVHIK.

Residues 1–13 (MADNKGGGGGGGE) show a composition bias toward gly residues. Positions 1–87 (MADNKGGGGG…SATPASSSSS (87 aa)) are disordered. Residues 52–87 (APVAAVPTDTPAEENPAPSSSSVASSSATPASSSSS) are compositionally biased toward low complexity. An RING-type 1 zinc finger spans residues 97–154 (CAVCKLSLQSRDTEPKLLPCLHSFCRRCLPEPERQLSVPGGTNGDIQQVGVIRCLVCR). Residues 180–227 (KSEQVCTSCEDNASAVGFCVECGEWLCKTCIEAHQRVKFTKDHIITNK) form a B box-type 1; atypical zinc finger. Residues C185, C188, C209, H213, C245, H248, C268, and H273 each coordinate Zn(2+). A B box-type 2 zinc finger spans residues 240–281 (QRPVFCPVHKQEQLKLFCETCDRLTCRDCQLLEHKEHRYQFL). The stretch at 269–361 (QLLEHKEHRY…QLESVTKERQ (93 aa)) forms a coiled coil. Disordered stretches follow at residues 672–779 (LPQP…TPPL) and 821–844 (GKSAVRNSMHRPPRGGGGGDGSNK). Positions 675–721 (PTSNMNPSPAPSAMSPGSTGLSNSHTPVRPPSTSSTGSRGSCGSSSR) are enriched in low complexity. Residues 754 to 763 (KQEKAEDGRR) show a composition bias toward basic and acidic residues. The segment covering 768–779 (LSSPESSLTPPL) has biased composition (low complexity). Residues 850–897 (EDWCAVCQNGGDLLCCEKCPKVFHLTCHVPTLLSFPSGEWICTFCRDL) form a PHD-type zinc finger. Residues 920–1043 (GLSPVDQMKC…LYFEEKLPAI (124 aa)) form the Bromo domain. The interval 1051–1091 (PLPEFEAEDDDGDVTDDSDDDDFVQPRRKRLKSEERPVHIK) is disordered. The segment covering 1055-1073 (FEAEDDDGDVTDDSDDDDF) has biased composition (acidic residues). The segment covering 1082-1091 (KSEERPVHIK) has biased composition (basic and acidic residues).

May interact with smad4.

It localises to the nucleus. The catalysed reaction is S-ubiquitinyl-[E2 ubiquitin-conjugating enzyme]-L-cysteine + [acceptor protein]-L-lysine = [E2 ubiquitin-conjugating enzyme]-L-cysteine + N(6)-ubiquitinyl-[acceptor protein]-L-lysine.. The protein operates within protein modification; protein ubiquitination. Its function is as follows. Acts as an E3 ubiquitin-protein ligase for smad4. Promotes ectoderm embryonic development at the expense of other germ layers. Inhibits mesodermal differentiation. Promotes neural development of the ectoderm. Promotes smad4 alpha degradation via the ubiquitin proteasome pathway. May act as a transcriptional repressor. The polypeptide is E3 ubiquitin-protein ligase TRIM33 (trim33) (Xenopus laevis (African clawed frog)).